The chain runs to 203 residues: Sarcosine oxidase subunit gamma (203 aa).

This sequence belongs to the SoxG family. As to quaternary structure, heterotetramer composed of subunits alpha (SoxA), beta (SoxB), gamma (SoxG) and delta (SoxD).

The protein resides in the cytoplasm. It catalyses the reaction sarcosine + (6S)-5,6,7,8-tetrahydrofolate + O2 = (6R)-5,10-methylene-5,6,7,8-tetrahydrofolate + glycine + H2O2. The enzyme catalyses sarcosine + O2 + H2O = formaldehyde + glycine + H2O2. Its function is as follows. In the presence of tetrahydrofolate, catalyzes the oxidative demethylation of sarcosine to yield glycine, 5,10-methylenetetrahydrofolate and hydrogen peroxide. In the absence of tetrahydrofolate, catalyzes the oxidative demethylation of sarcosine to yield glycine, formaldehyde and hydrogen peroxide. The polypeptide is Sarcosine oxidase subunit gamma (Corynebacterium sp. (strain P-1)).